A 78-amino-acid chain; its full sequence is Consomatin Nc1 (78 aa).

A signal peptide spans 1–22 (MQTAYWVMVMVMVWITAPLSEG). Residues 23–59 (GKPNDVIRGLVPDDLTPQLILRSLISRRRSDKDVGKR) constitute a propeptide that is removed on maturation. 4-carboxyglutamate is present on Glu-61. Cysteines 62 and 67 form a disulfide. Position 64 is a D-tryptophan (Trp-64). Residue Pro-70 is modified to 4-hydroxyproline. Positions 71–78 (LSRRHDLG) are excised as a propeptide.

Belongs to the conotoxin C superfamily. Consomatin family. Expressed by the venom duct.

The protein resides in the secreted. Its function is as follows. Moderately activates human somatostatin receptors (SSTR) with a preferential activation of SSTR1 and SSTR4. In vivo, does not cause behavioral changes in mice within a few minutes of intracranial injection, but causes a progressive loss of movement thereafter. Four to five hours after injection, mice recover, even with the highest dose tested. Shows antinociception and antihyperalgesia activities in two mouse models of acute pain, most probably by acting outside the central nervous system. The sequence is that of Consomatin Nc1 from Conus neocostatus (Cone snail).